Reading from the N-terminus, the 334-residue chain is Holliday junction branch migration complex subunit RuvB (334 aa).

Residues 4-184 (ADRLVSAGVI…FGIVQRLEFY (181 aa)) are large ATPase domain (RuvB-L). ATP contacts are provided by residues Ile-23, Arg-24, Gly-65, Lys-68, Thr-69, Thr-70, 131–133 (EDY), Arg-174, Tyr-184, and Arg-221. Thr-69 contacts Mg(2+). Residues 185–255 (RVEDLQHIVG…VASRALDMLS (71 aa)) are small ATPAse domain (RuvB-S). Positions 258–334 (SEGFDYMDRK…YKHFGITREG (77 aa)) are head domain (RuvB-H). Arg-294, Arg-313, and Arg-318 together coordinate DNA.

This sequence belongs to the RuvB family. Homohexamer. Forms an RuvA(8)-RuvB(12)-Holliday junction (HJ) complex. HJ DNA is sandwiched between 2 RuvA tetramers; dsDNA enters through RuvA and exits via RuvB. An RuvB hexamer assembles on each DNA strand where it exits the tetramer. Each RuvB hexamer is contacted by two RuvA subunits (via domain III) on 2 adjacent RuvB subunits; this complex drives branch migration. In the full resolvosome a probable DNA-RuvA(4)-RuvB(12)-RuvC(2) complex forms which resolves the HJ.

The protein resides in the cytoplasm. The enzyme catalyses ATP + H2O = ADP + phosphate + H(+). In terms of biological role, the RuvA-RuvB-RuvC complex processes Holliday junction (HJ) DNA during genetic recombination and DNA repair, while the RuvA-RuvB complex plays an important role in the rescue of blocked DNA replication forks via replication fork reversal (RFR). RuvA specifically binds to HJ cruciform DNA, conferring on it an open structure. The RuvB hexamer acts as an ATP-dependent pump, pulling dsDNA into and through the RuvAB complex. RuvB forms 2 homohexamers on either side of HJ DNA bound by 1 or 2 RuvA tetramers; 4 subunits per hexamer contact DNA at a time. Coordinated motions by a converter formed by DNA-disengaged RuvB subunits stimulates ATP hydrolysis and nucleotide exchange. Immobilization of the converter enables RuvB to convert the ATP-contained energy into a lever motion, pulling 2 nucleotides of DNA out of the RuvA tetramer per ATP hydrolyzed, thus driving DNA branch migration. The RuvB motors rotate together with the DNA substrate, which together with the progressing nucleotide cycle form the mechanistic basis for DNA recombination by continuous HJ branch migration. Branch migration allows RuvC to scan DNA until it finds its consensus sequence, where it cleaves and resolves cruciform DNA. In Erwinia tasmaniensis (strain DSM 17950 / CFBP 7177 / CIP 109463 / NCPPB 4357 / Et1/99), this protein is Holliday junction branch migration complex subunit RuvB.